Here is a 335-residue protein sequence, read N- to C-terminus: Nucleoid-associated protein YejK (335 aa).

It belongs to the YejK family.

The protein localises to the cytoplasm. It is found in the nucleoid. In Shigella dysenteriae serotype 1 (strain Sd197), this protein is Nucleoid-associated protein YejK.